The primary structure comprises 281 residues: MDLWLKEGQISDAVMTYKIKETLVRKKTEYQDLAIVDTYALGRMLVLDGIVQTSIKDEYVYHEMITHIPLYTHPNPKKVLVVGGGDGGTIREILKHPSVEKAVLCEIDEEVVKECKKHLPEISNNALEDSRCEVFIGDGIKYVNEHKNEFDVVIIDSTDPFGAAEGLFGGSFYGKISECLTEDGIFVAQTETPFYLPEIVKRVYDDSKAVFPVTKLFMAAIPTYPSGYWSFTIGSKKHDPEKAPVPEVLPFETKYYTPRLHSASFVLPKFVENLIFANISE.

In terms of domain architecture, PABS spans 2–236; the sequence is DLWLKEGQIS…GYWSFTIGSK (235 aa). Gln-31 serves as a coordination point for S-methyl-5'-thioadenosine. Residues His-62 and Asp-86 each contribute to the spermidine site. Residues Glu-106 and 138-139 contribute to the S-methyl-5'-thioadenosine site; that span reads DG. Asp-156 (proton acceptor) is an active-site residue. 156 to 159 is a binding site for spermidine; that stretch reads DSTD.

The protein belongs to the spermidine/spermine synthase family. Homodimer or homotetramer.

Its subcellular location is the cytoplasm. The enzyme catalyses S-adenosyl 3-(methylsulfanyl)propylamine + putrescine = S-methyl-5'-thioadenosine + spermidine + H(+). It functions in the pathway amine and polyamine biosynthesis; spermidine biosynthesis; spermidine from putrescine: step 1/1. Catalyzes the irreversible transfer of a propylamine group from the amino donor S-adenosylmethioninamine (decarboxy-AdoMet) to putrescine (1,4-diaminobutane) to yield spermidine. This chain is Polyamine aminopropyltransferase, found in Clostridium tetani (strain Massachusetts / E88).